A 118-amino-acid chain; its full sequence is Phosphoribosyl-AMP cyclohydrolase (118 aa).

Aspartate 87 serves as a coordination point for Mg(2+). Position 88 (cysteine 88) interacts with Zn(2+). The Mg(2+) site is built by aspartate 89 and aspartate 91. Zn(2+) is bound by residues cysteine 104 and cysteine 111.

It belongs to the PRA-CH family. As to quaternary structure, homodimer. The cofactor is Mg(2+). Zn(2+) is required as a cofactor.

Its subcellular location is the cytoplasm. The catalysed reaction is 1-(5-phospho-beta-D-ribosyl)-5'-AMP + H2O = 1-(5-phospho-beta-D-ribosyl)-5-[(5-phospho-beta-D-ribosylamino)methylideneamino]imidazole-4-carboxamide. The protein operates within amino-acid biosynthesis; L-histidine biosynthesis; L-histidine from 5-phospho-alpha-D-ribose 1-diphosphate: step 3/9. In terms of biological role, catalyzes the hydrolysis of the adenine ring of phosphoribosyl-AMP. The sequence is that of Phosphoribosyl-AMP cyclohydrolase from Corynebacterium glutamicum (strain R).